The sequence spans 287 residues: Probable ABC transporter extracellular-binding protein YckB (287 aa).

The first 24 residues, 1–24, serve as a signal peptide directing secretion; the sequence is MKSFMHSKAVIFSFTMAFFLILAA. The N-palmitoyl cysteine moiety is linked to residue Cys25. Cys25 carries the S-diacylglycerol cysteine lipid modification.

This sequence belongs to the bacterial solute-binding protein 3 family.

Its subcellular location is the cell membrane. In terms of biological role, probably part of a binding-protein-dependent transport system. The chain is Probable ABC transporter extracellular-binding protein YckB (yckB) from Bacillus subtilis (strain 168).